The primary structure comprises 828 residues: Neurotrophin receptor-interacting factor 1 (828 aa).

The KRAB 1 domain maps to valine 14–proline 85. A Glycyl lysine isopeptide (Lys-Gly) (interchain with G-Cter in ubiquitin) cross-link involves residue lysine 15. The region spanning arginine 158 to serine 240 is the SCAN box domain. The KRAB 2 domain maps to valine 280–glutamate 370. Disordered regions lie at residues arginine 328–threonine 355, asparagine 377–threonine 490, and glutamine 575–serine 611. The span at proline 345–threonine 355 shows a compositional bias: polar residues. A compositionally biased stretch (basic and acidic residues) spans glutamate 384–glutamate 394. Basic residues predominate over residues lysine 418–arginine 433. The span at arginine 458–glutamate 478 shows a compositional bias: polar residues. Positions serine 589–glycine 599 are enriched in basic residues. Positions serine 600 to serine 611 are enriched in basic and acidic residues. 5 consecutive C2H2-type zinc fingers follow at residues cysteine 684–histidine 706, tyrosine 712–histidine 734, phenylalanine 740–histidine 762, tyrosine 768–histidine 790, and tyrosine 796–histidine 818.

The protein belongs to the krueppel C2H2-type zinc-finger protein family. Interacts with NGFR/p75(NTR). Interacts (via KRAB 1 domain) with TRAF6. Interacts (when ubiquitinated at Lys-15) with SQSTM1/p62. In terms of processing, ubiquitinated by TRAF6 at Lys-15 through 'Lys-63'-linked polyubiquitination. 'Lys-63'-linked polyubiquitination occurs in response to NGFR/p75(NTR) cleavage by gamma-secretase and promotes binding with the ICD cleavage product of NGFR/p75(NTR), followed by translocation into the nucleus and subsequent apoptosis. Ubiquitously expressed at low level. Expressed at higher level in testis.

The protein resides in the cytoplasm. The protein localises to the nucleus. Its function is as follows. Transcription regulator involved in NGFR/p75(NTR)-mediated apoptosis. Essential component of the NGFR/p75(NTR) apoptotic pathway: upon ligand-binding and subsequent cleavage of NGFR/p75(NTR), binds to the intracellular domain (ICD) cleavage product of NGFR/p75(NTR), translocates to the nucleus and induces apoptosis, possibly by regulating expression of key regulators of apoptosis. Induces NGFR/p75(NTR)-mediated apoptosis in retina and sympathetic neurons. May also regulate expression of neuronal cholesterol biosynthesis genes. Probably acts as a transcription repressor: specifically binds to the 3'-end of zinc-finger coding genes and recruiting chromatin-modifying proteins such as SETDB1 and TRIM28/KAP1, leading to transcription repression. This Mus musculus (Mouse) protein is Neurotrophin receptor-interacting factor 1 (Nrif1).